The sequence spans 684 residues: Translation factor GUF1 homolog, mitochondrial (684 aa).

The region spanning 82-270 (HLIRNFSIIA…AVIERIPQPK (189 aa)) is the tr-type G domain. Residues 91–98 (AHVDHGKS), 163–167 (DTPGH), and 217–220 (NKID) contribute to the GTP site.

Belongs to the TRAFAC class translation factor GTPase superfamily. Classic translation factor GTPase family. LepA subfamily.

It is found in the mitochondrion inner membrane. It catalyses the reaction GTP + H2O = GDP + phosphate + H(+). Promotes mitochondrial protein synthesis. May act as a fidelity factor of the translation reaction, by catalyzing a one-codon backward translocation of tRNAs on improperly translocated ribosomes. Binds to mitochondrial ribosomes in a GTP-dependent manner. This is Translation factor GUF1 homolog, mitochondrial from Physcomitrium patens (Spreading-leaved earth moss).